Here is a 494-residue protein sequence, read N- to C-terminus: Psoralen synthase (494 aa).

A helical transmembrane segment spans residues 12-29 (YFFSLFLVTIFLYKWLTL). Cys-436 is a heme binding site.

It belongs to the cytochrome P450 family.

The protein resides in the endoplasmic reticulum membrane. Its subcellular location is the microsome membrane. It catalyses the reaction (7S)-marmesin + reduced [NADPH--hemoprotein reductase] + O2 = psoralen + acetone + oxidized [NADPH--hemoprotein reductase] + 2 H2O + H(+). With respect to regulation, inhibited by columbianetin. Its function is as follows. Involved in linear furanocumarin (psoralen) biosynthesis. Converts marmesin to psoralen. This chain is Psoralen synthase (CYP71AJ1), found in Ammi majus (Bishop's weed).